The sequence spans 242 residues: UDP-2,3-diacylglucosamine hydrolase (242 aa).

Residues Asp-9, His-11, Asp-42, Asn-79, and His-114 each coordinate Mn(2+). 79–80 (NR) contributes to the substrate binding site. Asp-122, Ser-160, Asn-164, Lys-167, and His-195 together coordinate substrate. Mn(2+) contacts are provided by His-195 and His-197.

Belongs to the LpxH family. Mn(2+) serves as cofactor.

It localises to the cell inner membrane. The enzyme catalyses UDP-2-N,3-O-bis[(3R)-3-hydroxytetradecanoyl]-alpha-D-glucosamine + H2O = 2-N,3-O-bis[(3R)-3-hydroxytetradecanoyl]-alpha-D-glucosaminyl 1-phosphate + UMP + 2 H(+). It participates in glycolipid biosynthesis; lipid IV(A) biosynthesis; lipid IV(A) from (3R)-3-hydroxytetradecanoyl-[acyl-carrier-protein] and UDP-N-acetyl-alpha-D-glucosamine: step 4/6. Functionally, hydrolyzes the pyrophosphate bond of UDP-2,3-diacylglucosamine to yield 2,3-diacylglucosamine 1-phosphate (lipid X) and UMP by catalyzing the attack of water at the alpha-P atom. Involved in the biosynthesis of lipid A, a phosphorylated glycolipid that anchors the lipopolysaccharide to the outer membrane of the cell. This is UDP-2,3-diacylglucosamine hydrolase from Shewanella loihica (strain ATCC BAA-1088 / PV-4).